The chain runs to 303 residues: tRNA pseudouridine synthase B (303 aa).

Catalysis depends on aspartate 47, which acts as the Nucleophile.

It belongs to the pseudouridine synthase TruB family. Type 1 subfamily.

The enzyme catalyses uridine(55) in tRNA = pseudouridine(55) in tRNA. Functionally, responsible for synthesis of pseudouridine from uracil-55 in the psi GC loop of transfer RNAs. This chain is tRNA pseudouridine synthase B, found in Legionella pneumophila (strain Paris).